Reading from the N-terminus, the 369-residue chain is Maltose/maltodextrin import ATP-binding protein MalK (369 aa).

The 231-residue stretch at 4 to 234 folds into the ABC transporter domain; it reads VTLSSVYKAF…PANRFVAGFI (231 aa). An ATP-binding site is contributed by 36–43; the sequence is GPSGCGKS.

The protein belongs to the ABC transporter superfamily. Maltooligosaccharide importer (TC 3.A.1.1.1) family. In terms of assembly, the complex is composed of two ATP-binding proteins (MalK), two transmembrane proteins (MalG and MalK) and a solute-binding protein (MalE).

The protein resides in the cell inner membrane. It carries out the reaction D-maltose(out) + ATP + H2O = D-maltose(in) + ADP + phosphate + H(+). In terms of biological role, part of the ABC transporter complex MalEFGK involved in maltose/maltodextrin import. Responsible for energy coupling to the transport system. This is Maltose/maltodextrin import ATP-binding protein MalK from Yersinia pestis bv. Antiqua (strain Antiqua).